The chain runs to 327 residues: Lipoyl synthase (327 aa).

7 residues coordinate [4Fe-4S] cluster: Cys66, Cys71, Cys77, Cys92, Cys96, Cys99, and Ser306. The Radical SAM core domain maps to 78–295; that stretch reads FSKGTATFMI…EKEAYELGFS (218 aa).

It belongs to the radical SAM superfamily. Lipoyl synthase family. [4Fe-4S] cluster is required as a cofactor.

It is found in the cytoplasm. It catalyses the reaction [[Fe-S] cluster scaffold protein carrying a second [4Fe-4S](2+) cluster] + N(6)-octanoyl-L-lysyl-[protein] + 2 oxidized [2Fe-2S]-[ferredoxin] + 2 S-adenosyl-L-methionine + 4 H(+) = [[Fe-S] cluster scaffold protein] + N(6)-[(R)-dihydrolipoyl]-L-lysyl-[protein] + 4 Fe(3+) + 2 hydrogen sulfide + 2 5'-deoxyadenosine + 2 L-methionine + 2 reduced [2Fe-2S]-[ferredoxin]. It functions in the pathway protein modification; protein lipoylation via endogenous pathway; protein N(6)-(lipoyl)lysine from octanoyl-[acyl-carrier-protein]: step 2/2. Its function is as follows. Catalyzes the radical-mediated insertion of two sulfur atoms into the C-6 and C-8 positions of the octanoyl moiety bound to the lipoyl domains of lipoate-dependent enzymes, thereby converting the octanoylated domains into lipoylated derivatives. This is Lipoyl synthase from Neisseria meningitidis serogroup A / serotype 4A (strain DSM 15465 / Z2491).